We begin with the raw amino-acid sequence, 108 residues long: Putative double-stranded DNA mimic protein PBPRA1522 (108 aa).

This sequence belongs to the putative dsDNA mimic protein family.

In terms of biological role, may act as a double-stranded DNA (dsDNA) mimic. Probably regulates the activity of a dsDNA-binding protein. The protein is Putative double-stranded DNA mimic protein PBPRA1522 of Photobacterium profundum (strain SS9).